A 432-amino-acid polypeptide reads, in one-letter code: Histidinol dehydrogenase (432 aa).

Ser-240, Gln-262, and His-265 together coordinate substrate. Residues Gln-262 and His-265 each coordinate Zn(2+). Catalysis depends on proton acceptor residues Glu-330 and His-331. 4 residues coordinate substrate: His-331, Asp-364, Glu-418, and His-423. Asp-364 is a Zn(2+) binding site. Zn(2+) is bound at residue His-423.

Belongs to the histidinol dehydrogenase family. Requires Zn(2+) as cofactor.

It catalyses the reaction L-histidinol + 2 NAD(+) + H2O = L-histidine + 2 NADH + 3 H(+). It functions in the pathway amino-acid biosynthesis; L-histidine biosynthesis; L-histidine from 5-phospho-alpha-D-ribose 1-diphosphate: step 9/9. Its function is as follows. Catalyzes the sequential NAD-dependent oxidations of L-histidinol to L-histidinaldehyde and then to L-histidine. In Wolinella succinogenes (strain ATCC 29543 / DSM 1740 / CCUG 13145 / JCM 31913 / LMG 7466 / NCTC 11488 / FDC 602W) (Vibrio succinogenes), this protein is Histidinol dehydrogenase.